Reading from the N-terminus, the 76-residue chain is Putative Fe(2+) transport protein A (76 aa).

The protein belongs to the FeoA family.

Functionally, might be involved in Fe(2+) ion uptake. The polypeptide is Putative Fe(2+) transport protein A (Helicobacter pylori (strain ATCC 700392 / 26695) (Campylobacter pylori)).